The primary structure comprises 380 residues: 3-methylitaconate isomerase (380 aa).

The protein belongs to the PrpF family. In terms of assembly, homotetramer.

The enzyme catalyses 2-methylene-3-methylsuccinate = dimethylmaleate. It functions in the pathway cofactor degradation; nicotinate degradation; propanoate and pyruvate from 6-hydroxynicotinate: step 6/8. Its activity is regulated as follows. Inhibited by oxidized glutathione, p-chloromercuriphenylsulfonic acid and iodoacetic acid. Not inhibited by the chelating agent alpha,alpha-dipyridyl. Activity is slightly increased by EDTA. Not activated by Fe(2+), Mg(2+), Mn(2+) or Ca(2+). Unaffected by K(+), Na(+), NH4(+), Rb(+) or Li(+). In terms of biological role, catalyzes the reversible isomerization of (R)-3-methylitaconate to 2,3-dimethylmaleate. Has very low isomerase activity with itaconate. The polypeptide is 3-methylitaconate isomerase (mii) (Eubacterium barkeri (Clostridium barkeri)).